We begin with the raw amino-acid sequence, 461 residues long: Protein FAM124B (461 aa).

Phosphoserine is present on serine 49. Residues 302–346 (VELPEPGGRPVSDGSSNTWWKSAGGSAQPSSPATESQPQLSSLHL) are disordered. Over residues 323-334 (SAGGSAQPSSPA) the composition is skewed to low complexity.

It belongs to the FAM124 family. In terms of assembly, interacts with CHD7 and CHD8.

It is found in the nucleus. In Bos taurus (Bovine), this protein is Protein FAM124B (FAM124B).